Reading from the N-terminus, the 118-residue chain is Large ribosomal subunit protein bL21c (118 aa).

The protein belongs to the bacterial ribosomal protein bL21 family. Part of the 50S ribosomal subunit.

The protein resides in the plastid. It localises to the chloroplast. Its function is as follows. This protein binds to 23S rRNA. This is Large ribosomal subunit protein bL21c from Anthoceros angustus (Hornwort).